The primary structure comprises 60 residues: Large ribosomal subunit protein uL30 (60 aa).

This sequence belongs to the universal ribosomal protein uL30 family. In terms of assembly, part of the 50S ribosomal subunit.

The chain is Large ribosomal subunit protein uL30 from Streptococcus pyogenes serotype M1.